A 215-amino-acid chain; its full sequence is Small ribosomal subunit protein uS3 (215 aa).

The region spanning 39 to 107 (VRQYLQKRLA…PVHINIEEIR (69 aa)) is the KH type-2 domain.

This sequence belongs to the universal ribosomal protein uS3 family. As to quaternary structure, part of the 30S ribosomal subunit. Forms a tight complex with proteins S10 and S14.

In terms of biological role, binds the lower part of the 30S subunit head. Binds mRNA in the 70S ribosome, positioning it for translation. In Nitrosomonas eutropha (strain DSM 101675 / C91 / Nm57), this protein is Small ribosomal subunit protein uS3.